Reading from the N-terminus, the 407-residue chain is Na(+)-translocating NADH-quinone reductase subunit F (407 aa).

Residues Ile3 to Phe23 form a helical membrane-spanning segment. The 95-residue stretch at Gly32–Ile126 folds into the 2Fe-2S ferredoxin-type domain. Residues Cys69, Cys75, Cys78, and Cys110 each coordinate [2Fe-2S] cluster. One can recognise an FAD-binding FR-type domain in the interval Val129 to Lys269.

The protein belongs to the NqrF family. As to quaternary structure, composed of six subunits; NqrA, NqrB, NqrC, NqrD, NqrE and NqrF. [2Fe-2S] cluster is required as a cofactor. FAD serves as cofactor.

The protein resides in the cell inner membrane. It catalyses the reaction a ubiquinone + n Na(+)(in) + NADH + H(+) = a ubiquinol + n Na(+)(out) + NAD(+). Functionally, NQR complex catalyzes the reduction of ubiquinone-1 to ubiquinol by two successive reactions, coupled with the transport of Na(+) ions from the cytoplasm to the periplasm. The first step is catalyzed by NqrF, which accepts electrons from NADH and reduces ubiquinone-1 to ubisemiquinone by a one-electron transfer pathway. This Yersinia pseudotuberculosis serotype I (strain IP32953) protein is Na(+)-translocating NADH-quinone reductase subunit F.